Reading from the N-terminus, the 406-residue chain is Peptidase T (406 aa).

A Zn(2+)-binding site is contributed by histidine 78. Residue aspartate 80 is part of the active site. Aspartate 139 contributes to the Zn(2+) binding site. The Proton acceptor role is filled by glutamate 173. Positions 174, 196, and 378 each coordinate Zn(2+).

The protein belongs to the peptidase M20B family. Requires Zn(2+) as cofactor.

The protein resides in the cytoplasm. The enzyme catalyses Release of the N-terminal residue from a tripeptide.. Functionally, cleaves the N-terminal amino acid of tripeptides. In Clostridium perfringens (strain 13 / Type A), this protein is Peptidase T.